The chain runs to 478 residues: Leukotoxin secretion protein D (478 aa).

Residues 1–77 (MKIWLSGIYE…LAVAIVLASV (77 aa)) are Cytoplasmic-facing. The helical transmembrane segment at 78–98 (SKVEIVATAPGKLTFSGRSKE) threads the bilayer. Residues 99–478 (IKPIENTIVQ…ESVTESLRER (380 aa)) lie on the Periplasmic side of the membrane.

It belongs to the membrane fusion protein (MFP) (TC 8.A.1) family.

Its subcellular location is the cell inner membrane. Functionally, involved in the transport of the Leukotoxin. The polypeptide is Leukotoxin secretion protein D (lktD) (Pasteurella haemolytica-like sp. (strain 5943B)).